A 250-amino-acid polypeptide reads, in one-letter code: N-acyl homoserine lactonase (250 aa).

H104, H106, D108, H109, H169, D191, and H235 together coordinate Zn(2+).

It belongs to the metallo-beta-lactamase superfamily. Monomer. Requires Zn(2+) as cofactor.

It catalyses the reaction an N-acyl-L-homoserine lactone + H2O = an N-acyl-L-homoserine + H(+). Catalyzes hydrolysis of N-hexanoyl-(S)-homoserine lactone, but not the R-enantiomer. Hydrolyzes short- and long-chain N-acyl homoserine lactones with or without 3-oxo substitution at C3, has maximum activity on C10-AHL. The sequence is that of N-acyl homoserine lactonase from Bacillus thuringiensis subsp. indiana.